The primary structure comprises 114 residues: Phosphoribosyl-AMP cyclohydrolase (114 aa).

D76 serves as a coordination point for Mg(2+). C77 provides a ligand contact to Zn(2+). Residues D78 and D80 each coordinate Mg(2+). Residues C93 and C100 each contribute to the Zn(2+) site.

It belongs to the PRA-CH family. As to quaternary structure, homodimer. Requires Mg(2+) as cofactor. Zn(2+) serves as cofactor.

Its subcellular location is the cytoplasm. The catalysed reaction is 1-(5-phospho-beta-D-ribosyl)-5'-AMP + H2O = 1-(5-phospho-beta-D-ribosyl)-5-[(5-phospho-beta-D-ribosylamino)methylideneamino]imidazole-4-carboxamide. It functions in the pathway amino-acid biosynthesis; L-histidine biosynthesis; L-histidine from 5-phospho-alpha-D-ribose 1-diphosphate: step 3/9. Its function is as follows. Catalyzes the hydrolysis of the adenine ring of phosphoribosyl-AMP. The polypeptide is Phosphoribosyl-AMP cyclohydrolase (Streptococcus gordonii (strain Challis / ATCC 35105 / BCRC 15272 / CH1 / DL1 / V288)).